A 196-amino-acid chain; its full sequence is DnaA initiator-associating protein DiaA (196 aa).

Residues 34 to 196 enclose the SIS domain; that stretch reads LVQSLLNGNK…DNTLFPHQDD (163 aa).

This sequence belongs to the SIS family. DiaA subfamily. In terms of assembly, homotetramer; dimer of dimers.

Required for the timely initiation of chromosomal replication via direct interactions with the DnaA initiator protein. The polypeptide is DnaA initiator-associating protein DiaA (Enterobacter sp. (strain 638)).